Consider the following 121-residue polypeptide: Large ribosomal subunit protein bL12 (121 aa).

It belongs to the bacterial ribosomal protein bL12 family. As to quaternary structure, homodimer. Part of the ribosomal stalk of the 50S ribosomal subunit. Forms a multimeric L10(L12)X complex, where L10 forms an elongated spine to which 2 to 4 L12 dimers bind in a sequential fashion. Binds GTP-bound translation factors.

Its function is as follows. Forms part of the ribosomal stalk which helps the ribosome interact with GTP-bound translation factors. Is thus essential for accurate translation. The protein is Large ribosomal subunit protein bL12 of Shewanella halifaxensis (strain HAW-EB4).